Reading from the N-terminus, the 195-residue chain is Holliday junction branch migration complex subunit RuvA (195 aa).

Residues M1–M64 are domain I. The tract at residues T65–E140 is domain II. The tract at residues E140–A144 is flexible linker. The tract at residues M145–K195 is domain III.

Belongs to the RuvA family. As to quaternary structure, homotetramer. Forms an RuvA(8)-RuvB(12)-Holliday junction (HJ) complex. HJ DNA is sandwiched between 2 RuvA tetramers; dsDNA enters through RuvA and exits via RuvB. An RuvB hexamer assembles on each DNA strand where it exits the tetramer. Each RuvB hexamer is contacted by two RuvA subunits (via domain III) on 2 adjacent RuvB subunits; this complex drives branch migration. In the full resolvosome a probable DNA-RuvA(4)-RuvB(12)-RuvC(2) complex forms which resolves the HJ.

It localises to the cytoplasm. The RuvA-RuvB-RuvC complex processes Holliday junction (HJ) DNA during genetic recombination and DNA repair, while the RuvA-RuvB complex plays an important role in the rescue of blocked DNA replication forks via replication fork reversal (RFR). RuvA specifically binds to HJ cruciform DNA, conferring on it an open structure. The RuvB hexamer acts as an ATP-dependent pump, pulling dsDNA into and through the RuvAB complex. HJ branch migration allows RuvC to scan DNA until it finds its consensus sequence, where it cleaves and resolves the cruciform DNA. This chain is Holliday junction branch migration complex subunit RuvA, found in Nitrosomonas europaea (strain ATCC 19718 / CIP 103999 / KCTC 2705 / NBRC 14298).